Here is a 154-residue protein sequence, read N- to C-terminus: 3-hydroxyacyl-[acyl-carrier-protein] dehydratase FabZ (154 aa).

The active site involves histidine 60.

Belongs to the thioester dehydratase family. FabZ subfamily.

It localises to the cytoplasm. The catalysed reaction is a (3R)-hydroxyacyl-[ACP] = a (2E)-enoyl-[ACP] + H2O. In terms of biological role, involved in unsaturated fatty acids biosynthesis. Catalyzes the dehydration of short chain beta-hydroxyacyl-ACPs and long chain saturated and unsaturated beta-hydroxyacyl-ACPs. The protein is 3-hydroxyacyl-[acyl-carrier-protein] dehydratase FabZ of Synechococcus sp. (strain CC9311).